The primary structure comprises 340 residues: MSSDELVYMNWREIIMPEKVAVTTTSTYGKFVCEPLEKGYGITIGNSLRRIILSSLYGAAIVSVKFSEALHEYSVVSDVREDVSEIIMNLKEVKLKLDDPGDKILTINVKGEKFVTAADIISGDGRVEILNPEQHIATVSKGGELMMTMLVKTGKGYALAASNKDPEAPVGTIPIDSVFSPIKRVKYVVGASRIGQKTDYDKLTMEIWTDGSVTPEDSVAYAAKILKEQMNPFINFDEDIEPELVEKEHEGAAKNFNENLYRSVDELELSVRSSNCLKNAQILKIYQLVQKTDNEMLKTKNFGRKSLNEIKEVLTSMDLSLGMDLEGFEPPEEDQIKEGE.

The segment at 1 to 237 (MSSDELVYMN…EQMNPFINFD (237 aa)) is alpha N-terminal domain (alpha-NTD). The segment at 256-340 (FNENLYRSVD…PEEDQIKEGE (85 aa)) is alpha C-terminal domain (alpha-CTD).

The protein belongs to the RNA polymerase alpha chain family. Homodimer. The RNAP catalytic core consists of 2 alpha, 1 beta, 1 beta' and 1 omega subunit. When a sigma factor is associated with the core the holoenzyme is formed, which can initiate transcription.

The enzyme catalyses RNA(n) + a ribonucleoside 5'-triphosphate = RNA(n+1) + diphosphate. Functionally, DNA-dependent RNA polymerase catalyzes the transcription of DNA into RNA using the four ribonucleoside triphosphates as substrates. In Desulforapulum autotrophicum (strain ATCC 43914 / DSM 3382 / VKM B-1955 / HRM2) (Desulfobacterium autotrophicum), this protein is DNA-directed RNA polymerase subunit alpha.